Here is a 469-residue protein sequence, read N- to C-terminus: Glutamate--tRNA ligase 1 (469 aa).

The 'HIGH' region motif lies at 10–20 (PSPTGYLHIGG). Positions 99, 101, 126, and 128 each coordinate Zn(2+). Positions 237–241 (RLSKR) match the 'KMSKS' region motif. Lys-240 lines the ATP pocket.

Belongs to the class-I aminoacyl-tRNA synthetase family. Glutamate--tRNA ligase type 1 subfamily. In terms of assembly, monomer. Zn(2+) serves as cofactor.

Its subcellular location is the cytoplasm. The catalysed reaction is tRNA(Glu) + L-glutamate + ATP = L-glutamyl-tRNA(Glu) + AMP + diphosphate. In terms of biological role, catalyzes the attachment of glutamate to tRNA(Glu) in a two-step reaction: glutamate is first activated by ATP to form Glu-AMP and then transferred to the acceptor end of tRNA(Glu). The chain is Glutamate--tRNA ligase 1 from Coxiella burnetii (strain CbuK_Q154) (Coxiella burnetii (strain Q154)).